The following is a 204-amino-acid chain: Urease accessory protein UreG (204 aa).

11–18 lines the GTP pocket; the sequence is GPVGAGKT.

Belongs to the SIMIBI class G3E GTPase family. UreG subfamily. As to quaternary structure, homodimer. UreD, UreF and UreG form a complex that acts as a GTP-hydrolysis-dependent molecular chaperone, activating the urease apoprotein by helping to assemble the nickel containing metallocenter of UreC. The UreE protein probably delivers the nickel.

Its subcellular location is the cytoplasm. Facilitates the functional incorporation of the urease nickel metallocenter. This process requires GTP hydrolysis, probably effectuated by UreG. The chain is Urease accessory protein UreG from Staphylococcus epidermidis (strain ATCC 12228 / FDA PCI 1200).